A 135-amino-acid polypeptide reads, in one-letter code: FK506-binding protein 2 (135 aa).

The N-terminal stretch at methionine 1 to alanine 20 is a signal peptide. A PPIase FKBP-type domain is found at glycine 40 to glutamate 128. Residues lysine 132–leucine 135 carry the Prevents secretion from ER motif.

Belongs to the FKBP-type PPIase family. FKBP2 subfamily.

Its subcellular location is the endoplasmic reticulum. The catalysed reaction is [protein]-peptidylproline (omega=180) = [protein]-peptidylproline (omega=0). With respect to regulation, inhibited by both FK506 and rapamycin. PPIases accelerate the folding of proteins. It catalyzes the cis-trans isomerization of proline imidic peptide bonds in oligopeptides. The protein is FK506-binding protein 2 (fkbB) of Emericella nidulans (strain FGSC A4 / ATCC 38163 / CBS 112.46 / NRRL 194 / M139) (Aspergillus nidulans).